Reading from the N-terminus, the 339-residue chain is Ferrochelatase (339 aa).

The Fe cation site is built by histidine 202 and glutamate 283.

This sequence belongs to the ferrochelatase family.

It localises to the cytoplasm. The catalysed reaction is heme b + 2 H(+) = protoporphyrin IX + Fe(2+). It functions in the pathway porphyrin-containing compound metabolism; protoheme biosynthesis; protoheme from protoporphyrin-IX: step 1/1. Its function is as follows. Catalyzes the ferrous insertion into protoporphyrin IX. The protein is Ferrochelatase of Psychrobacter arcticus (strain DSM 17307 / VKM B-2377 / 273-4).